The following is a 232-amino-acid chain: Ubiquitin-conjugating enzyme E2-24 kDa (232 aa).

A compositionally biased stretch (low complexity) spans 1 to 37 (MSSTPAAGSAAEVATSSATSNAPSAPSTTASNVSNTS). Residues 1–87 (MSSTPAAGSA…PRISRALGTS (87 aa)) are disordered. Residues 58 to 67 (GASGSNAGGG) are compositionally biased toward gly residues. The UBC core domain maps to 86–232 (TSAKRIQKEL…ARLWTKRYAT (147 aa)). C170 functions as the Glycyl thioester intermediate in the catalytic mechanism.

It belongs to the ubiquitin-conjugating enzyme family.

The enzyme catalyses S-ubiquitinyl-[E1 ubiquitin-activating enzyme]-L-cysteine + [E2 ubiquitin-conjugating enzyme]-L-cysteine = [E1 ubiquitin-activating enzyme]-L-cysteine + S-ubiquitinyl-[E2 ubiquitin-conjugating enzyme]-L-cysteine.. Its pathway is protein modification; protein ubiquitination. Its function is as follows. Catalyzes the covalent attachment of ubiquitin to other proteins. This chain is Ubiquitin-conjugating enzyme E2-24 kDa, found in Drosophila melanogaster (Fruit fly).